Reading from the N-terminus, the 255-residue chain is 1-(5-phosphoribosyl)-5-[(5-phosphoribosylamino)methylideneamino] imidazole-4-carboxamide isomerase (255 aa).

The active-site Proton acceptor is the Asp8. The active-site Proton donor is the Asp129.

The protein belongs to the HisA/HisF family.

It is found in the cytoplasm. The catalysed reaction is 1-(5-phospho-beta-D-ribosyl)-5-[(5-phospho-beta-D-ribosylamino)methylideneamino]imidazole-4-carboxamide = 5-[(5-phospho-1-deoxy-D-ribulos-1-ylimino)methylamino]-1-(5-phospho-beta-D-ribosyl)imidazole-4-carboxamide. It participates in amino-acid biosynthesis; L-histidine biosynthesis; L-histidine from 5-phospho-alpha-D-ribose 1-diphosphate: step 4/9. The polypeptide is 1-(5-phosphoribosyl)-5-[(5-phosphoribosylamino)methylideneamino] imidazole-4-carboxamide isomerase (Gloeobacter violaceus (strain ATCC 29082 / PCC 7421)).